Reading from the N-terminus, the 311-residue chain is DNA-directed RNA polymerase subunit alpha (311 aa).

An alpha N-terminal domain (alpha-NTD) region spans residues M1–D227. The alpha C-terminal domain (alpha-CTD) stretch occupies residues D239–D311.

This sequence belongs to the RNA polymerase alpha chain family. In terms of assembly, in plastids the minimal PEP RNA polymerase catalytic core is composed of four subunits: alpha, beta, beta', and beta''. When a (nuclear-encoded) sigma factor is associated with the core the holoenzyme is formed, which can initiate transcription.

It is found in the plastid. It localises to the chloroplast. The enzyme catalyses RNA(n) + a ribonucleoside 5'-triphosphate = RNA(n+1) + diphosphate. In terms of biological role, DNA-dependent RNA polymerase catalyzes the transcription of DNA into RNA using the four ribonucleoside triphosphates as substrates. The sequence is that of DNA-directed RNA polymerase subunit alpha from Pyropia yezoensis (Susabi-nori).